The chain runs to 198 residues: Ribonuclease HII (198 aa).

Residues arginine 3–glutamine 194 form the RNase H type-2 domain. Residues aspartate 9, glutamate 10, and aspartate 101 each contribute to the a divalent metal cation site.

The protein belongs to the RNase HII family. Mn(2+) serves as cofactor. Mg(2+) is required as a cofactor.

It is found in the cytoplasm. It catalyses the reaction Endonucleolytic cleavage to 5'-phosphomonoester.. Its function is as follows. Endonuclease that specifically degrades the RNA of RNA-DNA hybrids. The chain is Ribonuclease HII from Laribacter hongkongensis (strain HLHK9).